Reading from the N-terminus, the 301-residue chain is Homeobox protein Hox-D13 (301 aa).

Disordered stretches follow at residues 1 to 20 (MDGL…TPGQ) and 55 to 75 (GERS…PGSG). Residues 8 to 18 (SSGGGGGGGTP) are compositionally biased toward gly residues. The homeobox DNA-binding region spans 234 to 293 (GRKKRVPYTKLQLKELENEYAINKFINKDKRRRISAATNLSERQVTIWFQNRRVKDKKIV).

Belongs to the Abd-B homeobox family.

Its subcellular location is the nucleus. In terms of biological role, sequence-specific transcription factor that binds gene promoters and activates their transcription. Part of a developmental regulatory system that provides cells with specific positional identities on the anterior-posterior axis. The chain is Homeobox protein Hox-D13 (HOXD13) from Gallus gallus (Chicken).